A 406-amino-acid chain; its full sequence is MVVREKQGGRMGKGKGKGKEKECDINCFGRSFFRVLLTLQSLERMKIPSSFNQCLQNQPTGMVSLVDRSGNKWSAELTSDSEGFFFVHGWKEFVRDNSIQCGQFLVFTYDKRSQFSVTVFEPSGIDKISTFSAHPSKNVIIKTESDEGGMVTAAITTEKMAPALKENNGITGKRTRDVDYLMEDRVVVFKKSSEANVCESSRRKRAGASAGKSKVTSTSHNSTRGSSCSSDEDNSSSKSPNPPFLMRFLSGEVSRRGRCVSKGQRQLTVISQRRPVTEAEKDHALQRAREFKSKNPFAVQIMMESYVYVGFFMNIPCEFVRECLPHTNKRITLWDPQGKAWEVNYVYYSDRSVGSFSGGWGKFAVGNNLEKFDVCVFELVQKDNIKVHIYRVVPEITPHKLRSDPK.

Residues 1-20 (MVVREKQGGRMGKGKGKGKE) form a disordered region. The TF-B3 1 DNA-binding region spans 30–123 (RSFFRVLLTL…QFSVTVFEPS (94 aa)). Residues 199–245 (ESSRRKRAGASAGKSKVTSTSHNSTRGSSCSSDEDNSSSKSPNPPFL) form a disordered region. The segment covering 214-225 (KVTSTSHNSTRG) has biased composition (polar residues). The TF-B3 2 DNA-binding region spans 298-393 (AVQIMMESYV…NIKVHIYRVV (96 aa)).

The protein resides in the nucleus. The chain is B3 domain-containing protein Os11g0197600 from Oryza sativa subsp. japonica (Rice).